The sequence spans 328 residues: D-cysteine desulfhydrase (328 aa).

N6-(pyridoxal phosphate)lysine is present on K51.

The protein belongs to the ACC deaminase/D-cysteine desulfhydrase family. In terms of assembly, homodimer. Pyridoxal 5'-phosphate serves as cofactor.

It carries out the reaction D-cysteine + H2O = hydrogen sulfide + pyruvate + NH4(+) + H(+). Its function is as follows. Catalyzes the alpha,beta-elimination reaction of D-cysteine and of several D-cysteine derivatives. It could be a defense mechanism against D-cysteine. This is D-cysteine desulfhydrase from Salmonella paratyphi B (strain ATCC BAA-1250 / SPB7).